Consider the following 470-residue polypeptide: Poly(A) polymerase catalytic subunit (470 aa).

Active-site residues include Asp192 and Asp194.

It belongs to the poxviridae poly(A) polymerase catalytic subunit family. As to quaternary structure, heterodimer of a large (catalytic) subunit and a small (regulatory) subunit.

It carries out the reaction RNA(n) + ATP = RNA(n)-3'-adenine ribonucleotide + diphosphate. Functionally, polymerase that creates the 3'-poly(A) tail of mRNA's. The sequence is that of Poly(A) polymerase catalytic subunit (PAPL) from Oryctolagus cuniculus (Rabbit).